A 392-amino-acid chain; its full sequence is N-acetylneuraminate epimerase (392 aa).

An N-terminal signal peptide occupies residues 1-35 (MTQLYPQYKKQLTTKIVLFSALSLLMMASLPNTYA). 7 Kelch repeats span residues 56 to 100 (SLYV…VVLA), 102 to 155 (KLYV…TTLD), 157 to 192 (SQAV…AVIN), 193 to 238 (AYFN…SRMD), 241 to 290 (LILI…LAGA), 312 to 361 (KQFN…QGPD), and 363 to 392 (VILI…LHIE). Glu-247 serves as the catalytic Proton acceptor.

Belongs to the NanM family. In terms of assembly, homodimer.

It is found in the periplasm. It catalyses the reaction N-acetyl-alpha-neuraminate = N-acetyl-beta-neuraminate. Converts alpha-N-acetylneuranimic acid (Neu5Ac) to the beta-anomer, accelerating the equilibrium between the alpha- and beta-anomers. Probably facilitates sialidase-negative bacteria to compete successfully for limited amounts of extracellular Neu5Ac, which is likely taken up in the beta-anomer. In addition, the rapid removal of sialic acid from solution might be advantageous to the bacterium to damp down host responses. The sequence is that of N-acetylneuraminate epimerase from Yersinia pseudotuberculosis serotype O:1b (strain IP 31758).